Reading from the N-terminus, the 129-residue chain is NADH-quinone oxidoreductase subunit 15 (129 aa).

This sequence belongs to the complex I Nqo15 family. As to quaternary structure, NDH-1 is composed of 15 different subunits, Nqo1 to Nqo15. The complex has a L-shaped structure, with the hydrophobic arm (subunits Nqo7, Nqo8 and Nqo10 to Nqo14) embedded in the membrane and the hydrophilic peripheral arm (subunits Nqo1 to Nqo6, Nqo9 and Nqo15) protruding into the bacterial cytoplasm. The hydrophilic domain contains all the redox centers. Nqo15 is bound to the side of the complex near the N-terminus of Nqo3, where it interacts with subunits Nqo3, Nqo2, Nqo1, Nqo9 and Nqo4.

Its subcellular location is the cell membrane. The enzyme catalyses a quinone + NADH + 5 H(+)(in) = a quinol + NAD(+) + 4 H(+)(out). NDH-1 shuttles electrons from NADH, via FMN and iron-sulfur (Fe-S) centers, to quinones in the respiratory chain. The immediate electron acceptor for the enzyme in this species is menaquinone. Couples the redox reaction to proton translocation (for every two electrons transferred, four hydrogen ions are translocated across the cytoplasmic membrane), and thus conserves the redox energy in a proton gradient required for the synthesis of ATP. The Nqo15 subunit has probably a role in complex stabilization, and may be also involved in the storage of iron for iron-sulfur cluster regeneration in the complex. This chain is NADH-quinone oxidoreductase subunit 15 (nqo15), found in Thermus thermophilus (strain ATCC 27634 / DSM 579 / HB8).